Here is a 237-residue protein sequence, read N- to C-terminus: Urease accessory protein UreF (237 aa).

This sequence belongs to the UreF family. In terms of assembly, ureD, UreF and UreG form a complex that acts as a GTP-hydrolysis-dependent molecular chaperone, activating the urease apoprotein by helping to assemble the nickel containing metallocenter of UreC. The UreE protein probably delivers the nickel.

The protein resides in the cytoplasm. Required for maturation of urease via the functional incorporation of the urease nickel metallocenter. This is Urease accessory protein UreF from Methylibium petroleiphilum (strain ATCC BAA-1232 / LMG 22953 / PM1).